Here is a 139-residue protein sequence, read N- to C-terminus: Large ribosomal subunit protein uL16 (139 aa).

Over residues 1 to 17 (MLIPRRTKHRKQHHPRR) the composition is skewed to basic residues. A disordered region spans residues 1-24 (MLIPRRTKHRKQHHPRRTGAASGG).

It belongs to the universal ribosomal protein uL16 family. As to quaternary structure, part of the 50S ribosomal subunit.

Its function is as follows. Binds 23S rRNA and is also seen to make contacts with the A and possibly P site tRNAs. This is Large ribosomal subunit protein uL16 from Beutenbergia cavernae (strain ATCC BAA-8 / DSM 12333 / CCUG 43141 / JCM 11478 / NBRC 16432 / NCIMB 13614 / HKI 0122).